The chain runs to 153 residues: MGKSILLINGPNLNLLGTREPHIYGSTTLADVEASSKAHAASLGATLETYQSNHEGAIVDRIQAARGNVDGIVINPGAYTHTSVAIRDALVGVDIPFIELHVSNVHAREPWRHHSYFSDKAAGIIVGLGVYGYKVAVEHVAVNFKSREEKAAL.

Tyr24 acts as the Proton acceptor in catalysis. Residues Asn75, His81, and Asp88 each contribute to the substrate site. His101 (proton donor) is an active-site residue. Substrate contacts are provided by residues 102–103 and Arg112; that span reads VS.

It belongs to the type-II 3-dehydroquinase family. In terms of assembly, homododecamer. Adopts a ring-like structure, composed of an arrangement of two hexameric rings stacked on top of one another.

It catalyses the reaction 3-dehydroquinate = 3-dehydroshikimate + H2O. The protein operates within aromatic compound metabolism; 3,4-dihydroxybenzoate biosynthesis; 3,4-dihydroxybenzoate from 3-dehydroquinate: step 1/2. Is involved in the catabolism of quinate. Allows the utilization of quinate as carbon source via the beta-ketoadipate pathway. The polypeptide is Catabolic 3-dehydroquinase (Aspergillus oryzae (strain ATCC 42149 / RIB 40) (Yellow koji mold)).